A 333-amino-acid chain; its full sequence is Adenosine deaminase (333 aa).

Zn(2+) contacts are provided by His-12 and His-14. Substrate contacts are provided by His-14, Asp-16, and Gly-170. A Zn(2+)-binding site is contributed by His-197. The active-site Proton donor is Glu-200. Asp-278 contacts Zn(2+). Asp-279 is a substrate binding site.

It belongs to the metallo-dependent hydrolases superfamily. Adenosine and AMP deaminases family. Adenosine deaminase subfamily. Zn(2+) is required as a cofactor.

It carries out the reaction adenosine + H2O + H(+) = inosine + NH4(+). It catalyses the reaction 2'-deoxyadenosine + H2O + H(+) = 2'-deoxyinosine + NH4(+). In terms of biological role, catalyzes the hydrolytic deamination of adenosine and 2-deoxyadenosine. This is Adenosine deaminase from Pseudoalteromonas translucida (strain TAC 125).